Consider the following 443-residue polypeptide: Ribosomal protein uS12 methylthiotransferase RimO (443 aa).

The region spanning 5 to 115 is the MTTase N-terminal domain; sequence PNIGFISLGC…VMKHVHKYVP (111 aa). Residues C14, C50, C79, C147, C151, and C154 each coordinate [4Fe-4S] cluster. The region spanning 133-374 is the Radical SAM core domain; it reads LTPKHYAYLK…MQVQQRISAA (242 aa). In terms of domain architecture, TRAM spans 377–443; that stretch reads QQKVGKTLAV…ADEYDLWGTC (67 aa).

The protein belongs to the methylthiotransferase family. RimO subfamily. [4Fe-4S] cluster serves as cofactor.

It is found in the cytoplasm. The enzyme catalyses L-aspartate(89)-[ribosomal protein uS12]-hydrogen + (sulfur carrier)-SH + AH2 + 2 S-adenosyl-L-methionine = 3-methylsulfanyl-L-aspartate(89)-[ribosomal protein uS12]-hydrogen + (sulfur carrier)-H + 5'-deoxyadenosine + L-methionine + A + S-adenosyl-L-homocysteine + 2 H(+). Functionally, catalyzes the methylthiolation of an aspartic acid residue of ribosomal protein uS12. The sequence is that of Ribosomal protein uS12 methylthiotransferase RimO from Actinobacillus pleuropneumoniae serotype 7 (strain AP76).